Consider the following 258-residue polypeptide: Pro-thyrotropin-releasing hormone-A (258 aa).

Positions 1–22 are cleaved as a signal peptide; sequence MKSACLIILASLVVCNLTLARG. Gln-78 is subject to Pyrrolidone carboxylic acid. Pro-80 carries the post-translational modification Proline amide. Composition is skewed to basic and acidic residues over residues 84–98 and 107–119; these read YQEE…GKRE and EVQK…KRED. The tract at residues 84–124 is disordered; it reads YQEELEKRQHPGKREEDEDEDYDEVQKRQHPGKREDEFDSF. At Gln-92 the chain carries Pyrrolidone carboxylic acid. Pro-94 carries the post-translational modification Proline amide. Gln-112 carries the pyrrolidone carboxylic acid modification. Pro-114 bears the Proline amide mark. Residue Gln-131 is modified to Pyrrolidone carboxylic acid. Pro-133 is modified (proline amide). A Pyrrolidone carboxylic acid modification is found at Gln-156. At Pro-158 the chain carries Proline amide. Disordered stretches follow at residues 166-215 and 236-258; these read YSKR…PCDV and SRAE…TEQE. Position 170 is a pyrrolidone carboxylic acid (Gln-170). Pro-172 carries the post-translational modification Proline amide. A compositionally biased stretch (basic and acidic residues) spans 184-193; the sequence is GDLRELEKRQ. Residue Gln-193 is modified to Pyrrolidone carboxylic acid. Residue Pro-195 is modified to Proline amide. Gln-242 carries the pyrrolidone carboxylic acid modification. Pro-244 is subject to Proline amide.

This sequence belongs to the TRH family.

The protein localises to the secreted. In terms of biological role, functions as a regulator of the biosynthesis of TSH in the anterior pituitary gland and as a neurotransmitter/ neuromodulator in the central and peripheral nervous systems. The protein is Pro-thyrotropin-releasing hormone-A (trha) of Oncorhynchus nerka (Sockeye salmon).